Consider the following 682-residue polypeptide: Potassium-transporting ATPase ATP-binding subunit (682 aa).

A run of 4 helical transmembrane segments spans residues 34–54 (PVMFVVWAGSVLTTLLTLAMV), 58–78 (IAGSALFTGIISLWLWFTVLF), 219–239 (IALTILLIALTIVFLLATATL), and 254–274 (VLVALLVCLIPTTIGGLLSAI). Aspartate 307 (4-aspartylphosphate intermediate) is an active-site residue. ATP contacts are provided by residues aspartate 344, glutamate 348, 377–384 (FTAQSRMS), and lysine 395. 2 residues coordinate Mg(2+): aspartate 518 and aspartate 522. Helical transmembrane passes span 588–608 (FAIIPAAFAATYPQLNALNVM), 616–636 (AILSAVIFNALIIIFLIPLAL), and 662–682 (LVVPFIGIKVIDVLLTLLGLA).

The protein belongs to the cation transport ATPase (P-type) (TC 3.A.3) family. Type IA subfamily. As to quaternary structure, the system is composed of three essential subunits: KdpA, KdpB and KdpC.

Its subcellular location is the cell inner membrane. The catalysed reaction is K(+)(out) + ATP + H2O = K(+)(in) + ADP + phosphate + H(+). Its function is as follows. Part of the high-affinity ATP-driven potassium transport (or Kdp) system, which catalyzes the hydrolysis of ATP coupled with the electrogenic transport of potassium into the cytoplasm. This subunit is responsible for energy coupling to the transport system and for the release of the potassium ions to the cytoplasm. The protein is Potassium-transporting ATPase ATP-binding subunit of Salmonella newport (strain SL254).